A 1099-amino-acid chain; its full sequence is R3H domain-containing protein 1 (1099 aa).

The interval 111–146 (SFEKEEKPSKDEAEKEKASDKLPRKMLSRDSSQEYT) is disordered. Residues 112–142 (FEKEEKPSKDEAEKEKASDKLPRKMLSRDSS) show a composition bias toward basic and acidic residues. The region spanning 168–231 (RMMLLKLEQE…SVIVNKTSNT (64 aa)) is the R3H domain. Ser187 and Ser262 each carry phosphoserine. The SUZ domain maps to 232-302 (RIPDQKFNEH…ARDRIFSQDS (71 aa)). The segment at 267-287 (DNQMRIRLKDDRRSKSIEERE) is disordered. Position 302 is a phosphoserine (Ser302). Positions 331–370 (RVNKDASGRSTNSHQSSTENELKYSEPRPWSSTDSDSSLR) are disordered. Composition is skewed to polar residues over residues 338–349 (GRSTNSHQSSTE) and 360–370 (WSSTDSDSSLR). A phosphoserine mark is found at Ser380, Ser381, and Ser393. Disordered stretches follow at residues 387–439 (VLTR…SSHG), 490–537 (QTGQ…AANH), 583–625 (YIMT…HPVS), and 797–825 (EQVQFPRTTSPCSSQQLQGHQCTAGPPPP). The span at 391–422 (GDSSGSSKSIGRLSKTGSESSGSVGSSTGSLS) shows a compositional bias: low complexity. Composition is skewed to pro residues over residues 519–532 (PGPPQPPLPAPPQQ) and 588–611 (APPPHPPPPPPPPPPPPPLPPGQP). The span at 797 to 817 (EQVQFPRTTSPCSSQQLQGHQ) shows a compositional bias: polar residues. An Asymmetric dimethylarginine; alternate modification is found at Arg929. Arg929 is modified (omega-N-methylarginine; alternate). The tract at residues 941–977 (PPAVLHGHIPNQQGQPGSRHGNRGRRQAKKAASTDLG) is disordered. Positions 960–969 (HGNRGRRQAK) are enriched in basic residues. Phosphoserine is present on Ser973.

This chain is R3H domain-containing protein 1 (R3HDM1), found in Homo sapiens (Human).